Here is a 658-residue protein sequence, read N- to C-terminus: Squalene--hopene cyclase (658 aa).

Residues 69–110 (EAKIGRYLRRIQGEHGGWSLFYGGDLDLSATVKAYFALKMIG) form a PFTB 1 repeat. Asp-392 serves as the catalytic Proton donor. PFTB repeat units follow at residues 418–459 (KARA…GALL), 486–526 (MKAA…NVAA), and 534–584 (IQKA…GLMA).

The protein belongs to the terpene cyclase/mutase family.

It localises to the cell membrane. The catalysed reaction is squalene = hop-22(29)-ene. It catalyses the reaction squalene + H2O = hopan-22-ol. The protein operates within secondary metabolite biosynthesis; hopanoid biosynthesis. Its function is as follows. Catalyzes the cyclization of squalene into hopene. The protein is Squalene--hopene cyclase (shc) of Zymomonas mobilis subsp. mobilis (strain ATCC 31821 / ZM4 / CP4).